A 228-amino-acid polypeptide reads, in one-letter code: Claudin-10 (228 aa).

A helical membrane pass occupies residues 1–21 (MASTASEIIAFMVSISGWVLV). Over 22-80 (SSTLPTDYWKVSTIDGTVITTATYWANLWKACVTDSTGVSNCKDFPSMLALDGYIQACR) the chain is Extracellular. Residues 81–101 (GLMIAAVSLGFFGSIFALFGM) traverse the membrane as a helical segment. Residues 102–115 (KCTKVGGSDKAKAK) are Cytoplasmic-facing. The chain crosses the membrane as a helical span at residues 116 to 136 (IACLAGIVFILSGLCSMTGCS). Over 137–160 (LYANKITTEFFDPLFVEQKYELGA) the chain is Extracellular. The chain crosses the membrane as a helical span at residues 161-181 (ALFIGWAGASLCIIGGVIFCF). At 182–228 (SISDNNKTPRYAYNGATSVMSSRTKYHGGEDFKTTNPSKQFDKNAYV) the chain is on the cytoplasmic side.

It belongs to the claudin family. In terms of assembly, can form homodimers both in trans (interaction between CLDN10 molecules in opposing membranes) and in cis (interaction between CLDN10 molecules within one membrane). Interacts with CLDN19.

It is found in the cell junction. It localises to the tight junction. Its subcellular location is the cell membrane. It catalyses the reaction Na(+)(in) = Na(+)(out). The catalysed reaction is Li(+)(in) = Li(+)(out). The enzyme catalyses K(+)(in) = K(+)(out). It carries out the reaction Rb(+)(in) = Rb(+)(out). It catalyses the reaction Cs(+)(in) = Cs(+)(out). The catalysed reaction is NH4(+)(in) = NH4(+)(out). The enzyme catalyses methylamine(out) = methylamine(in). It carries out the reaction Mg(2+)(in) = Mg(2+)(out). It catalyses the reaction Ca(2+)(in) = Ca(2+)(out). The catalysed reaction is Sr(2+)(in) = Sr(2+)(out). The enzyme catalyses chloride(in) = chloride(out). It carries out the reaction nitrate(in) = nitrate(out). In terms of biological role, forms paracellular channels: polymerizes in tight junction strands with cation- and anion-selective channels through the strands, conveying epithelial permeability in a process known as paracellular tight junction permeability. In sweat glands and in the thick ascending limb (TAL) of Henle's loop in kidney, it controls paracellular sodium permeability which is essential for proper sweat production and renal function. In renal proximal tubules, it conveys selective chloride over hydrogencarbonate anion permeability which is required for renal chloride reabsorption and salt homeostasis. The chain is Claudin-10 (CLDN10) from Pongo abelii (Sumatran orangutan).